A 395-amino-acid polypeptide reads, in one-letter code: MKNIVVLGSTGSIGVSSLDVIDKLGAGYGVLALSANTNADLLIKQMLKFKPRFVAVLNEDSYQKVKPYVPENTKLLPPDEDSLIFLASLPSADLIINGLVGAVGFMPLVTAIKNGKTIALANKEPIVMAGKSIMEECYRWKATILPVDSEPSAIFQCLQGTPAGRKEEDISRLLLTASGGPFFKYKGALSRVKPEAALAHPRWVMGKKITIDSATLMNKGFETIEIMHLFNVSLSDIEIVIHPQSIIHSAVEFKDGSILAQLSQPDMRLPIQYAVTYPNRMPSPVKKLTVKDMAKLEFAAPDFKKFPCLELALWSAQKEGAFPAVLSAADEIAVDAYLKEKILFTDIPKLIYSVLKETRSPSGKITISEAAEFDVWAREKAREFLANKKYKKTII.

NADPH contacts are provided by Thr10, Gly11, Ser12, Ile13, Asn38, and Asn122. Lys123 contributes to the 1-deoxy-D-xylulose 5-phosphate binding site. Residue Glu124 participates in NADPH binding. Asp148 serves as a coordination point for Mn(2+). Residues Ser149, Glu150, Ser178, and His200 each coordinate 1-deoxy-D-xylulose 5-phosphate. Glu150 provides a ligand contact to Mn(2+). Gly206 provides a ligand contact to NADPH. Residues Ser213, Asn218, Lys219, and Glu222 each coordinate 1-deoxy-D-xylulose 5-phosphate. Glu222 provides a ligand contact to Mn(2+).

It belongs to the DXR family. It depends on Mg(2+) as a cofactor. Mn(2+) serves as cofactor.

It carries out the reaction 2-C-methyl-D-erythritol 4-phosphate + NADP(+) = 1-deoxy-D-xylulose 5-phosphate + NADPH + H(+). It participates in isoprenoid biosynthesis; isopentenyl diphosphate biosynthesis via DXP pathway; isopentenyl diphosphate from 1-deoxy-D-xylulose 5-phosphate: step 1/6. Catalyzes the NADPH-dependent rearrangement and reduction of 1-deoxy-D-xylulose-5-phosphate (DXP) to 2-C-methyl-D-erythritol 4-phosphate (MEP). The sequence is that of 1-deoxy-D-xylulose 5-phosphate reductoisomerase from Elusimicrobium minutum (strain Pei191).